A 281-amino-acid chain; its full sequence is 2-dehydro-3-deoxyphosphooctonate aldolase (281 aa).

The protein belongs to the KdsA family.

Its subcellular location is the cytoplasm. It catalyses the reaction D-arabinose 5-phosphate + phosphoenolpyruvate + H2O = 3-deoxy-alpha-D-manno-2-octulosonate-8-phosphate + phosphate. It participates in carbohydrate biosynthesis; 3-deoxy-D-manno-octulosonate biosynthesis; 3-deoxy-D-manno-octulosonate from D-ribulose 5-phosphate: step 2/3. Its pathway is bacterial outer membrane biogenesis; lipopolysaccharide biosynthesis. The protein is 2-dehydro-3-deoxyphosphooctonate aldolase of Hahella chejuensis (strain KCTC 2396).